A 265-amino-acid polypeptide reads, in one-letter code: Cytochrome c oxidase subunit 3 (265 aa).

6 helical membrane-spanning segments follow: residues 41 to 61 (GGARLLSLGLIFILYTMFVWW), 85 to 105 (GFILFIVSEVMFFFAFFWAFF), 137 to 157 (TLILLSSGAAVTWAHHAILAG), 162 to 182 (AVYALVATVLLALVFTGFQGM), 200 to 220 (FFLATGFHGFHVIIGTLFLII), and 245 to 265 (WHFVDVVWLFLFVSIYWWGGI).

The protein belongs to the cytochrome c oxidase subunit 3 family. Component of the cytochrome c oxidase (complex IV, CIV), a multisubunit enzyme composed of a catalytic core of 3 subunits and several supernumerary subunits. The complex exists as a monomer or a dimer and forms supercomplexes (SCs) in the inner mitochondrial membrane with ubiquinol-cytochrome c oxidoreductase (cytochrome b-c1 complex, complex III, CIII).

The protein localises to the mitochondrion inner membrane. It carries out the reaction 4 Fe(II)-[cytochrome c] + O2 + 8 H(+)(in) = 4 Fe(III)-[cytochrome c] + 2 H2O + 4 H(+)(out). In terms of biological role, component of the cytochrome c oxidase, the last enzyme in the mitochondrial electron transport chain which drives oxidative phosphorylation. The respiratory chain contains 3 multisubunit complexes succinate dehydrogenase (complex II, CII), ubiquinol-cytochrome c oxidoreductase (cytochrome b-c1 complex, complex III, CIII) and cytochrome c oxidase (complex IV, CIV), that cooperate to transfer electrons derived from NADH and succinate to molecular oxygen, creating an electrochemical gradient over the inner membrane that drives transmembrane transport and the ATP synthase. Cytochrome c oxidase is the component of the respiratory chain that catalyzes the reduction of oxygen to water. Electrons originating from reduced cytochrome c in the intermembrane space (IMS) are transferred via the dinuclear copper A center (CU(A)) of subunit 2 and heme A of subunit 1 to the active site in subunit 1, a binuclear center (BNC) formed by heme A3 and copper B (CU(B)). The BNC reduces molecular oxygen to 2 water molecules using 4 electrons from cytochrome c in the IMS and 4 protons from the mitochondrial matrix. In Arabidopsis thaliana (Mouse-ear cress), this protein is Cytochrome c oxidase subunit 3 (COX3).